The primary structure comprises 615 residues: DNA mismatch repair protein MutL (615 aa).

Residues 363–397 are disordered; the sequence is FAEPAAREPVAPRYSPAPASGSRPAAPWPNAQPGY. Low complexity predominate over residues 364–387; it reads AEPAAREPVAPRYSPAPASGSRPA.

The protein belongs to the DNA mismatch repair MutL/HexB family.

In terms of biological role, this protein is involved in the repair of mismatches in DNA. It is required for dam-dependent methyl-directed DNA mismatch repair. May act as a 'molecular matchmaker', a protein that promotes the formation of a stable complex between two or more DNA-binding proteins in an ATP-dependent manner without itself being part of a final effector complex. In Shigella flexneri, this protein is DNA mismatch repair protein MutL.